The sequence spans 330 residues: MENVNRIVAEGIAAVEAAQDFNALEQIKARYLGKTGELTGLLKTLGQMSPEERKTIGAHINECKNRFQTAFNAKREALNEVKLQARLAAEALDITLPGRAQEGGSLHPVTLTLQRVVELFHGMGFEVADGPEIEDDFHNFQALNIPANHPARAMQDTFYVENGDVLRTHTSPIQIRYMLDKKEPPIRIIAPGRVYRVDSDATHSPMFHQAEGLWVEEGVTFADLKAVFTDFIRRFFERDDLQVRFRPSFFPFTEPSAEIDIMGENGKWLEVGGCGMVHPNVLKNVNIDPEKYTGFAFGIGLDRFAMLRYNVNDLRLFFDNDLNFLKQFAK.

Glu-254 is a Mg(2+) binding site.

Belongs to the class-II aminoacyl-tRNA synthetase family. Phe-tRNA synthetase alpha subunit type 1 subfamily. In terms of assembly, tetramer of two alpha and two beta subunits. It depends on Mg(2+) as a cofactor.

It is found in the cytoplasm. The catalysed reaction is tRNA(Phe) + L-phenylalanine + ATP = L-phenylalanyl-tRNA(Phe) + AMP + diphosphate + H(+). In Neisseria meningitidis serogroup B (strain ATCC BAA-335 / MC58), this protein is Phenylalanine--tRNA ligase alpha subunit (pheS).